A 229-amino-acid chain; its full sequence is Potassium/proton antiporter CemA (229 aa).

3 consecutive transmembrane segments (helical) span residues 6–26 (AFIPFFYFTSIVFLPWLISLC), 107–127 (ILHFSTNLISFVILSGYSFWA), and 189–209 (ILSGLVSTFPVILDTIFKYWI).

The protein belongs to the CemA family.

The protein resides in the plastid. It is found in the chloroplast inner membrane. The catalysed reaction is K(+)(in) + H(+)(out) = K(+)(out) + H(+)(in). Its function is as follows. Contributes to K(+)/H(+) antiport activity by supporting proton efflux to control proton extrusion and homeostasis in chloroplasts in a light-dependent manner to modulate photosynthesis. Prevents excessive induction of non-photochemical quenching (NPQ) under continuous-light conditions. Indirectly promotes efficient inorganic carbon uptake into chloroplasts. This is Potassium/proton antiporter CemA from Crucihimalaya wallichii (Rock-cress).